The primary structure comprises 264 residues: Thiazole synthase (264 aa).

Lysine 106 acts as the Schiff-base intermediate with DXP in catalysis. 1-deoxy-D-xylulose 5-phosphate is bound by residues glycine 167, 193 to 194, and 215 to 216; these read AG and NT.

The protein belongs to the ThiG family. In terms of assembly, homotetramer. Forms heterodimers with either ThiH or ThiS.

The protein localises to the cytoplasm. The enzyme catalyses [ThiS sulfur-carrier protein]-C-terminal-Gly-aminoethanethioate + 2-iminoacetate + 1-deoxy-D-xylulose 5-phosphate = [ThiS sulfur-carrier protein]-C-terminal Gly-Gly + 2-[(2R,5Z)-2-carboxy-4-methylthiazol-5(2H)-ylidene]ethyl phosphate + 2 H2O + H(+). Its pathway is cofactor biosynthesis; thiamine diphosphate biosynthesis. Its function is as follows. Catalyzes the rearrangement of 1-deoxy-D-xylulose 5-phosphate (DXP) to produce the thiazole phosphate moiety of thiamine. Sulfur is provided by the thiocarboxylate moiety of the carrier protein ThiS. In vitro, sulfur can be provided by H(2)S. The sequence is that of Thiazole synthase from Thioalkalivibrio sulfidiphilus (strain HL-EbGR7).